A 604-amino-acid chain; its full sequence is Tyrosine-protein kinase transforming protein erbB (604 aa).

Positions 132–399 constitute a Protein kinase domain; that stretch reads FKKVKVLGSG…KMARDPPRYL (268 aa). ATP contacts are provided by residues 138–146 and K165; that span reads LGSGAFGTI. The Proton acceptor role is filled by D257.

The protein belongs to the protein kinase superfamily. Tyr protein kinase family. EGF receptor subfamily.

The catalysed reaction is L-tyrosyl-[protein] + ATP = O-phospho-L-tyrosyl-[protein] + ADP + H(+). Functionally, the v-erbB oncogene transforms avian fibroblasts and erythroblasts in culture and induces sarcomas and erythroleukemias in chickens. It is a truncated and mutated version of the receptor for epidermal growth factor. This is Tyrosine-protein kinase transforming protein erbB (V-ERBB) from Galliformes.